Consider the following 184-residue polypeptide: ATP synthase subunit b (184 aa).

A helical transmembrane segment spans residues 24–44; that stretch reads ILVVVVGFALLMFIVIKFIVP.

The protein belongs to the ATPase B chain family. In terms of assembly, F-type ATPases have 2 components, F(1) - the catalytic core - and F(0) - the membrane proton channel. F(1) has five subunits: alpha(3), beta(3), gamma(1), delta(1), epsilon(1). F(0) has three main subunits: a(1), b(2) and c(10-14). The alpha and beta chains form an alternating ring which encloses part of the gamma chain. F(1) is attached to F(0) by a central stalk formed by the gamma and epsilon chains, while a peripheral stalk is formed by the delta and b chains.

The protein resides in the cell membrane. F(1)F(0) ATP synthase produces ATP from ADP in the presence of a proton or sodium gradient. F-type ATPases consist of two structural domains, F(1) containing the extramembraneous catalytic core and F(0) containing the membrane proton channel, linked together by a central stalk and a peripheral stalk. During catalysis, ATP synthesis in the catalytic domain of F(1) is coupled via a rotary mechanism of the central stalk subunits to proton translocation. In terms of biological role, component of the F(0) channel, it forms part of the peripheral stalk, linking F(1) to F(0). The sequence is that of ATP synthase subunit b (atpF) from Micrococcus luteus (strain ATCC 4698 / DSM 20030 / JCM 1464 / CCM 169 / CCUG 5858 / IAM 1056 / NBRC 3333 / NCIMB 9278 / NCTC 2665 / VKM Ac-2230) (Micrococcus lysodeikticus).